The chain runs to 911 residues: MVDYHAASQSYQYGPSSAGNGAGGGGSMGDYMAQEDDWDRDLLLDPAWEKQQRKTFTAWCNSHLRKAGTQIENIDEDFRDGLKLMLLLEVISGERLPKPERGKMRVHKINNVNKALDFIASKGVKLVSIGAEEIVDGNAKMTLGMIWTIILRFAIQDISVEETSAKEGLLLWCQRKTAPYKNVNVQNFHISWKDGLAFNALIHRHRPELIEYDKLRKDDPVTNLNNAFEVAEKYLDIPKMLDAEDIVNTARPDEKAIMTYVSSFYHAFSGAQKAETAANRICRVLAVNQENEHLMEDYEKLASDLLEWIRRTIPWLEDRVPQKTIQEMQQKLEDFRDYRRVHKPPKVQEKCQLEINFNTLQTKLRLSNRPAFMPSEGKMVSDINNGWQHLEQAEKGYEEWLLNEIRRLERLDHLAEKFRQKASIHEAWTDGKEAMLKHRDYETATLSDIKALIRKHEAFESDLAAHQDRVEQIAAIAQELNELDYYDSHNVNTRCQKICDQWDALGSLTHSRREALEKTEKQLEAIDQLHLEYAKRAAPFNNWMESAMEDLQDMFIVHTIEEIEGLISAHDQFKSTLPDADREREAILAIHKEAQRIAESNHIKLSGSNPYTTVTPQIINSKWEKVQQLVPKRDHALLEEQSKQQSNEHLRRQFASQANVVGPWIQTKMEEIGRISIEMNGTLEDQLSHLKQYERSIVDYKPNLDLLEQQHQLIQEALIFDNKHTNYTMEHIRVGWEQLLTTIARTINEVENQILTRDAKGISQEQMQEFRASFNHFDKDHGGALGPEEFKACLISLGYDVENDRQGEAEFNRIMSLVDPNHSGLVTFQAFIDFMSRETTDTDTADQVIASFKVLAGDKNFITAEELRRELPPDQAEYCIARMAPYQGPDAVPGALDYKSFSTALYGESDL.

Positions 1–30 (MVDYHAASQSYQYGPSSAGNGAGGGGSMGD) are disordered. The segment at 1–269 (MVDYHAASQS…YVSSFYHAFS (269 aa)) is actin-binding. The interval 12–26 (QYGPSSAGNGAGGGG) is interaction with VCL. Tyr31 is subject to Phosphotyrosine. The interaction with VCL stretch occupies residues 40–61 (RDLLLDPAWEKQQRKTFTAWCN). Calponin-homology (CH) domains are found at residues 50–154 (KQQR…LRFA) and 163–269 (TSAK…HAFS). The short motif at 84-88 (LMLLL) is the LXXLL motif element. Residues 108–126 (KINNVNKALDFIASKGVKL) form an interaction with VCL region. An N6-acetyllysine modification is found at Lys114. Residues 177–192 (TAPYKNVNVQNFHISW) form a polyphosphoinositide (PIP2)-binding region. N6-acetyllysine is present on Lys214. At Thr249 the chain carries Phosphothreonine. 4 Spectrin repeats span residues 293 to 403 (HLME…WLLN), 413 to 518 (HLAE…ALEK), 528 to 639 (QLHL…ALLE), and 649 to 752 (HLRR…EVEN). Lys592 and Lys625 each carry N6-acetyllysine. Ser696 is modified (phosphoserine). The tract at residues 736–911 (WEQLLTTIAR…STALYGESDL (176 aa)) is mediates interaction with MICALL2. EF-hand domains follow at residues 765–800 (EQMQEFRASFNHFDKDHGGALGPEEFKACLISLGYD) and 806–841 (QGEAEFNRIMSLVDPNHSGLVTFQAFIDFMSRETTD). Asp778 serves as a coordination point for Ca(2+). Position 779 is an N6-acetyllysine (Lys779). Ca(2+) contacts are provided by Asp780 and Glu789. Lys859 is modified (N6-acetyllysine). At Ser909 the chain carries Phosphoserine.

The protein belongs to the alpha-actinin family. As to quaternary structure, homodimer; antiparallel. Identified in a IGF2BP1-dependent mRNP granule complex containing untranslated mRNAs. Component of the CART complex, at least composed of ACTN4, HGS/HRS, MYO5B and TRIM3. Binds TRIM3 at the N-terminus. Interacts with MAGI1. Interacts with PDLIM2. Identified in a complex with CASK, IQGAP1, MAGI2, NPHS1, SPTAN1 and SPTBN1. Interacts with MICALL2 (preferentially in opened conformation); stimulated by RAB13 activation. Interacts with PPARG and RARA. Binds to VCL; this interaction triggers VCL conformational changes. Interacts with SEPTIN14. Interacts with IGSF8.

It localises to the nucleus. The protein resides in the cytoplasm. It is found in the cell junction. Its subcellular location is the cytoskeleton. The protein localises to the stress fiber. It localises to the perinuclear region. Its function is as follows. F-actin cross-linking protein which is thought to anchor actin to a variety of intracellular structures. This is a bundling protein. Probably involved in vesicular trafficking via its association with the CART complex. The CART complex is necessary for efficient transferrin receptor recycling but not for EGFR degradation. Involved in tight junction assembly in epithelial cells probably through interaction with MICALL2. Links MICALL2 to the actin cytoskeleton and recruits it to the tight junctions. May also function as a transcriptional coactivator, stimulating transcription mediated by the nuclear hormone receptors PPARG and RARA. Association with IGSF8 regulates the immune synapse formation and is required for efficient T-cell activation. The sequence is that of Alpha-actinin-4 from Pongo abelii (Sumatran orangutan).